A 102-amino-acid polypeptide reads, in one-letter code: MANKKIRIRLKAYEHRTLDTAAGKIVENATRTGATVAGPVPLSTERSLYTIIRATHKYKDSREQFEMRTHKRLIDIINPTQKTVDALMKLDLPSGVNVEIKL.

It belongs to the universal ribosomal protein uS10 family. In terms of assembly, part of the 30S ribosomal subunit.

Functionally, involved in the binding of tRNA to the ribosomes. The chain is Small ribosomal subunit protein uS10 from Streptococcus thermophilus (strain CNRZ 1066).